Consider the following 406-residue polypeptide: Arginine biosynthesis bifunctional protein ArgJ (406 aa).

Residues Thr-152, Lys-179, Thr-190, Glu-277, Asn-401, and Ser-406 each contribute to the substrate site. Catalysis depends on Thr-190, which acts as the Nucleophile.

It belongs to the ArgJ family. Heterotetramer of two alpha and two beta chains.

It localises to the cytoplasm. The catalysed reaction is N(2)-acetyl-L-ornithine + L-glutamate = N-acetyl-L-glutamate + L-ornithine. It catalyses the reaction L-glutamate + acetyl-CoA = N-acetyl-L-glutamate + CoA + H(+). The protein operates within amino-acid biosynthesis; L-arginine biosynthesis; L-ornithine and N-acetyl-L-glutamate from L-glutamate and N(2)-acetyl-L-ornithine (cyclic): step 1/1. It functions in the pathway amino-acid biosynthesis; L-arginine biosynthesis; N(2)-acetyl-L-ornithine from L-glutamate: step 1/4. Functionally, catalyzes two activities which are involved in the cyclic version of arginine biosynthesis: the synthesis of N-acetylglutamate from glutamate and acetyl-CoA as the acetyl donor, and of ornithine by transacetylation between N(2)-acetylornithine and glutamate. The chain is Arginine biosynthesis bifunctional protein ArgJ from Neisseria meningitidis serogroup A / serotype 4A (strain DSM 15465 / Z2491).